Reading from the N-terminus, the 192-residue chain is T-cell surface glycoprotein CD3 epsilon chain (192 aa).

Residues 1–21 (MQTGNLWQVLGLCLLLVGAWA) form the signal peptide. The Extracellular segment spans residues 22–111 (QDDTEQNPYE…RVCKNCMEVN (90 aa)). The Ig-like domain occupies 27–98 (QNPYEVSISG…GNTEAAHTLY (72 aa)). A disulfide bond links cysteine 43 and cysteine 84. A helical transmembrane segment spans residues 112 to 137 (LLEVATIIVVDICVTLGLLLLVYYWS). Topologically, residues 138–192 (KSRKAKATPMTRGAGAGGRPRGQNRERPPPVPNPDYEPIRKGQRDLYSGLNQRGV) are cytoplasmic. The disordered stretch occupies residues 146–192 (PMTRGAGAGGRPRGQNRERPPPVPNPDYEPIRKGQRDLYSGLNQRGV). An NUMB-binding region region spans residues 160–177 (QNRERPPPVPNPDYEPIR). The ITAM domain occupies 163-190 (ERPPPVPNPDYEPIRKGQRDLYSGLNQR). Positions 164-171 (RPPPVPNP) are proline-rich sequence. Tyrosine 173 and tyrosine 184 each carry phosphotyrosine.

The TCR-CD3 complex is composed of a CD3D/CD3E and a CD3G/CD3E heterodimers that preferentially associate with TCRalpha and TCRbeta, respectively, to form TCRalpha/CD3E/CD3G and TCRbeta/CD3G/CD3E trimers. In turn, the hexamer interacts with CD3Z homodimer to form the TCR-CD3 complex. Alternatively, TCRalpha and TCRbeta can be replaced by TCRgamma and TCRdelta. Interacts with CD6. Interacts (via Proline-rich sequence) with NCK1; the interaction is ligand dependent but independent of tyrosine kinase activation. Post-translationally, phosphorylated on Tyr residues after T-cell receptor triggering by LCK in association with CD4/CD8.

The protein localises to the cell membrane. Part of the TCR-CD3 complex present on T-lymphocyte cell surface that plays an essential role in adaptive immune response. When antigen presenting cells (APCs) activate T-cell receptor (TCR), TCR-mediated signals are transmitted across the cell membrane by the CD3 chains CD3D, CD3E, CD3G and CD3Z. All CD3 chains contain immunoreceptor tyrosine-based activation motifs (ITAMs) in their cytoplasmic domain. Upon TCR engagement, these motifs become phosphorylated by Src family protein tyrosine kinases LCK and FYN, resulting in the activation of downstream signaling pathways. In addition of this role of signal transduction in T-cell activation, CD3E plays an essential role in correct T-cell development. Also participates in internalization and cell surface down-regulation of TCR-CD3 complexes via endocytosis sequences present in CD3E cytosolic region. In addition to its role as a TCR coreceptor, it serves as a receptor for ITPRIPL1. Ligand recognition inhibits T-cell activation by promoting interaction with NCK1, which prevents CD3E-ZAP70 interaction and blocks the ERK-NFkB signaling cascade and calcium influx. The sequence is that of T-cell surface glycoprotein CD3 epsilon chain (CD3E) from Ovis aries (Sheep).